The primary structure comprises 172 residues: Small acidic protein (172 aa).

Over residues 1 to 10 the composition is skewed to polar residues; the sequence is MSSARDSQAQ. Residues 1 to 172 form a disordered region; it reads MSSARDSQAQ…KMMFVKASGS (172 aa). Basic and acidic residues predominate over residues 46-76; the sequence is GKKEHTGRLVIGDHRSTSHFRTGEEDKKMNE. Polar residues predominate over residues 80–92; that stretch reads SQYQQSMDSTMSG. Residues 112 to 122 show a composition bias toward basic and acidic residues; sequence AAGHSSDHESS. The segment covering 123–138 has biased composition (acidic residues); the sequence is EDSESGSDSEQDESAE. Positions 142–160 are enriched in basic and acidic residues; that stretch reads AAEKHDEAAVPENKKEAKS.

Belongs to the SMAP family. Expressed in otocyst.

The chain is Small acidic protein (SMAP) from Coturnix japonica (Japanese quail).